Consider the following 266-residue polypeptide: Cytochrome c oxidase assembly factor 7 homolog (266 aa).

Sel1-like repeat units follow at residues 32–64 (PEAC…DDYG) and 66–104 (AKSC…NLND). Residues 166-179 (AVTASSGSGTSSPP) are compositionally biased toward low complexity. Positions 166-187 (AVTASSGSGTSSPPAGQPPLKD) are disordered. The Sel1-like 3 repeat unit spans residues 212–247 (MYACANLSQMYARGDGIEKNEKEAEKYKKLALEMQD).

This sequence belongs to the hcp beta-lactamase family.

Its function is as follows. Required for locomotion. Probably involved in the regulation of formation/maintenance of motor neurons at presynaptic terminals at the neuromuscular junction. In Drosophila melanogaster (Fruit fly), this protein is Cytochrome c oxidase assembly factor 7 homolog.